The chain runs to 40 residues: Bacterioferritin heavy chain (40 aa).

Residues 1-40 enclose the Ferritin-like diiron domain; sequence MRGNPEVIDYLNMLIGGELAARDQYLIHSRMYEDWGLTKY. A Fe cation-binding site is contributed by E18.

The protein belongs to the bacterioferritin family. Oligomer consisting of two types of subunits: light chain and heavy chain.

In terms of biological role, may perform analogous functions in iron detoxification and storage to that of animal ferritins. Contains approximately 750 iron atoms per molecule. This chain is Bacterioferritin heavy chain, found in Absidia spinosa.